Reading from the N-terminus, the 347-residue chain is Core-capsid bridging protein (347 aa).

A disordered region spans residues 290-320 (GYRGTTFQRRATAPSRRRGPSRRRRRRKATL). The span at 304–318 (SRRRGPSRRRRRRKA) shows a compositional bias: basic residues.

This sequence belongs to the adenoviridae core-capsid bridging protein family. As to quaternary structure, monomer. Homodimer. Exists in equilibrium between monomers and dimers in solution. Interacts with the histone-like nucleoprotein; this interactions bridge the virus core to the capsid. Interacts with core protein X; this interactions bridge the virus core to the capsid. Interacts with the endosome lysis protein VI; this interactions bridge the virus core to the capsid. Interacts with the peripentonal hexons. Interacts with host NPM1; this interaction might play a role in virus assembly.

The protein resides in the virion. Its subcellular location is the host nucleus. It is found in the host nucleolus. In terms of biological role, associates loosely with the viral DNA to form an outer shell around the nucleoprotein-DNA complex and links it with the capsid by binding the endosome lysis protein. Dissociates from the viral genome during entry. Might be involved in nuclear capsid assembly of the viral particles through its association with NPM1/nucleophosmin. The chain is Core-capsid bridging protein from Homo sapiens (Human).